Consider the following 454-residue polypeptide: Serine/threonine-protein kinase NLK2 (454 aa).

Residues 67–356 (PEPDRPIGYG…AKDALAHPYL (290 aa)) enclose the Protein kinase domain. Residues 73-81 (IGYGAFGVV) and Lys-96 contribute to the ATP site. The Proton acceptor role is filled by Asp-193.

It belongs to the protein kinase superfamily. CMGC Ser/Thr protein kinase family. MAP kinase subfamily. Interacts with sox11, hmgxb4/hmg2l1, rnf138/narf, stat3.1 and mef2a. Mg(2+) is required as a cofactor.

It is found in the nucleus. The protein resides in the cytoplasm. The catalysed reaction is L-seryl-[protein] + ATP = O-phospho-L-seryl-[protein] + ADP + H(+). It catalyses the reaction L-threonyl-[protein] + ATP = O-phospho-L-threonyl-[protein] + ADP + H(+). With respect to regulation, activated by tyrosine and threonine phosphorylation. In terms of biological role, negatively regulates Wnt/beta-catenin-signaling during development. Plays a role together with sox11 in neural induction during early embryogenesis. Involved in TGFbeta-mediated mesoderm induction in early embryos, acting downstream of map3k7/tak1 to phosphorylate stat3. Augments the rnf138/narf-directed ubiquitination and degradation of tcf/lef by enhancing the association of rnf138/narf and tcf/lef. Phosphorylates mef2a to play a role in anterior neural development, including eye formation. The polypeptide is Serine/threonine-protein kinase NLK2 (nlk.2) (Xenopus tropicalis (Western clawed frog)).